The following is a 190-amino-acid chain: Ribosome maturation factor RimM (190 aa).

Residues 102 to 190 form the PRC barrel domain; sequence EDEYYWIDLV…RIDSDWPLED (89 aa).

Belongs to the RimM family. In terms of assembly, binds ribosomal protein uS19.

It localises to the cytoplasm. An accessory protein needed during the final step in the assembly of 30S ribosomal subunit, possibly for assembly of the head region. Essential for efficient processing of 16S rRNA. May be needed both before and after RbfA during the maturation of 16S rRNA. It has affinity for free ribosomal 30S subunits but not for 70S ribosomes. This is Ribosome maturation factor RimM from Bordetella avium (strain 197N).